The following is a 116-amino-acid chain: Large ribosomal subunit protein uL18 (116 aa).

This sequence belongs to the universal ribosomal protein uL18 family. As to quaternary structure, part of the 50S ribosomal subunit; part of the 5S rRNA/L5/L18/L25 subcomplex. Contacts the 5S and 23S rRNAs.

In terms of biological role, this is one of the proteins that bind and probably mediate the attachment of the 5S RNA into the large ribosomal subunit, where it forms part of the central protuberance. This is Large ribosomal subunit protein uL18 from Marinomonas sp. (strain MWYL1).